Reading from the N-terminus, the 194-residue chain is Extracellular globin-E1 (194 aa).

Globin domains are found at residues 1–45 (DISH…MGLS) and 55–194 (GLSG…LRQA). Heme b is bound at residue His-150.

This sequence belongs to the globin family. As to quaternary structure, artemia hemoglobin is a dimer of two similar sized subunits. Each subunit represents a globin chain which exists in two forms (alpha and beta), thus making possible three different phenotypes (HB1, alpha(2), HB2, alpha/beta, HB3, beta(2)). The globin chain is a polymer of eight heme-binding covalently linked domains.

The polypeptide is Extracellular globin-E1 (Artemia sp. (Brine shrimp)).